The sequence spans 150 residues: Linear element protein rec25 (150 aa).

Ser-11 is subject to Phosphoserine.

In terms of assembly, component of linear elements (LinEs), which are similar to synaptonemal complexes, at least composed of rec27, rec25, rec10 and mug20. Interacts with rec10; the interaction is direct.

It is found in the cytoplasm. The protein localises to the nucleus. It localises to the chromosome. Its function is as follows. During meiotic DNA recombination, binds to and may help activate DNA double-strand break (DSB) hotspot sites. This is Linear element protein rec25 from Schizosaccharomyces pombe (strain 972 / ATCC 24843) (Fission yeast).